Here is a 521-residue protein sequence, read N- to C-terminus: Serine/threonine-protein kinase A (521 aa).

A Protein kinase domain is found at 15 to 289 (YQLVELVGSG…DVIIRAIDAI (275 aa)). ATP-binding positions include 21-29 (VGSGAMGQV) and lysine 45. Residue aspartate 148 is the Proton acceptor of the active site.

This sequence belongs to the protein kinase superfamily. Ser/Thr protein kinase family. In terms of processing, autophosphorylated.

It catalyses the reaction L-seryl-[protein] + ATP = O-phospho-L-seryl-[protein] + ADP + H(+). The enzyme catalyses L-threonyl-[protein] + ATP = O-phospho-L-threonyl-[protein] + ADP + H(+). Protein kinase that regulates cellular motility via phosphorylation of membrane proteins. The sequence is that of Serine/threonine-protein kinase A (spkA) from Synechocystis sp. (strain ATCC 27184 / PCC 6803 / Kazusa).